The primary structure comprises 548 residues: Chaperonin GroEL (548 aa).

ATP-binding positions include 30–33 (TLGP), Lys-51, 87–91 (DGTTT), Gly-415, and Asp-495.

The protein belongs to the chaperonin (HSP60) family. As to quaternary structure, forms a cylinder of 14 subunits composed of two heptameric rings stacked back-to-back. Interacts with the co-chaperonin GroES.

The protein resides in the cytoplasm. The enzyme catalyses ATP + H2O + a folded polypeptide = ADP + phosphate + an unfolded polypeptide.. Functionally, together with its co-chaperonin GroES, plays an essential role in assisting protein folding. The GroEL-GroES system forms a nano-cage that allows encapsulation of the non-native substrate proteins and provides a physical environment optimized to promote and accelerate protein folding. The polypeptide is Chaperonin GroEL (Photorhabdus laumondii subsp. laumondii (strain DSM 15139 / CIP 105565 / TT01) (Photorhabdus luminescens subsp. laumondii)).